A 242-amino-acid chain; its full sequence is Uridylate kinase (242 aa).

11–14 (KLSG) is a binding site for ATP. The interval 19-24 (GDKGVG) is involved in allosteric activation by GTP. G53 contributes to the UMP binding site. 2 residues coordinate ATP: G54 and R58. Residues D73 and 134–141 (IGSPYFST) each bind UMP. Positions 162, 168, and 171 each coordinate ATP.

It belongs to the UMP kinase family. Homohexamer.

The protein localises to the cytoplasm. The enzyme catalyses UMP + ATP = UDP + ADP. It functions in the pathway pyrimidine metabolism; CTP biosynthesis via de novo pathway; UDP from UMP (UMPK route): step 1/1. With respect to regulation, allosterically activated by GTP. Inhibited by UTP. Functionally, catalyzes the reversible phosphorylation of UMP to UDP. The protein is Uridylate kinase of Streptococcus agalactiae serotype III (strain NEM316).